Reading from the N-terminus, the 210-residue chain is Oligoribonuclease (210 aa).

An Exonuclease domain is found at 12–177 (LVWIDLEMTG…ADIVESIREL (166 aa)). Tyr134 is an active-site residue.

Belongs to the oligoribonuclease family.

It is found in the cytoplasm. In terms of biological role, 3'-to-5' exoribonuclease specific for small oligoribonucleotides. This Corynebacterium diphtheriae (strain ATCC 700971 / NCTC 13129 / Biotype gravis) protein is Oligoribonuclease.